We begin with the raw amino-acid sequence, 183 residues long: Thioredoxin-like protein CITRX, chloroplastic (183 aa).

The transit peptide at 1–81 (MALVQSRTFP…REDYLVKKLS (81 aa)) directs the protein to the chloroplast. The Thioredoxin domain occupies 82–183 (AQELQELVKG…MMHDIIDNEM (102 aa)). Active-site nucleophile residues include cysteine 106 and cysteine 109. Cysteine 106 and cysteine 109 form a disulfide bridge.

This sequence belongs to the thioredoxin family. Plant CITRX-type subfamily. Interacts with FLN1 and FLN2. Interacts with MRL7.

It is found in the plastid. Its subcellular location is the chloroplast. Thiol-disulfide oxidoreductase that plays a role in proper chloroplast development, most likely through regulating plastid-encoded polymerase (PEP) dependent chloroplast transcription. Acts as a component of the transcriptionally active plastid chromosome that is required for plastid gene expression. The sequence is that of Thioredoxin-like protein CITRX, chloroplastic from Arabidopsis thaliana (Mouse-ear cress).